A 246-amino-acid polypeptide reads, in one-letter code: tRNA (guanine-N(7)-)-methyltransferase (246 aa).

S-adenosyl-L-methionine contacts are provided by Glu-76, Glu-101, Asp-128, and Asp-151. Asp-151 is an active-site residue. Lys-155 contributes to the substrate binding site. An interaction with RNA region spans residues 157 to 162 (RHNKRR). Residues Asp-187 and 222 to 225 (TKFE) each bind substrate.

Belongs to the class I-like SAM-binding methyltransferase superfamily. TrmB family.

It carries out the reaction guanosine(46) in tRNA + S-adenosyl-L-methionine = N(7)-methylguanosine(46) in tRNA + S-adenosyl-L-homocysteine. Its pathway is tRNA modification; N(7)-methylguanine-tRNA biosynthesis. Catalyzes the formation of N(7)-methylguanine at position 46 (m7G46) in tRNA. This chain is tRNA (guanine-N(7)-)-methyltransferase, found in Dechloromonas aromatica (strain RCB).